A 1114-amino-acid chain; its full sequence is OTU domain-containing protein 4 (1114 aa).

An N-acetylmethionine modification is found at Met1. Residues 1–22 (MEAAVGVPDGGDQGGAGPREDA) form a disordered region. Residues 8–17 (PDGGDQGGAG) show a composition bias toward gly residues. Residues 34–155 (LYRKLVAKDG…GNHYDIVYPI (122 aa)) enclose the OTU domain. Residues 39 to 45 (VAKDGSC) are cys-loop. Residue Asp42 is part of the active site. Cys45 acts as the Nucleophile in catalysis. Positions 94–104 (LENPQEWVGQV) are variable-loop. Tyr120 is modified (phosphotyrosine). Phosphoserine is present on residues Ser126 and Ser128. Phosphothreonine is present on Thr131. Positions 143–148 (FSNGNH) are his-loop. Residue His148 is part of the active site. Ser166, Ser199, Ser202, Ser204, and Ser341 each carry phosphoserine. The disordered stretch occupies residues 323-449 (KHTSKNLKAP…FGLSPEERRE (127 aa)). Residues 392–404 (FSSHSSGSQSQKF) are compositionally biased toward low complexity. Residues 420–435 (RKPDRERVEDFDHTSR) are compositionally biased toward basic and acidic residues. Tyr439 is subject to Phosphotyrosine. Position 443 is a phosphoserine (Ser443). Tyr460 bears the Phosphotyrosine mark. The segment at 472 to 567 (ALSSSSVNQS…PAEQKPAEHV (96 aa)) is disordered. The segment covering 474-487 (SSSSVNQSASQSSN) has biased composition (low complexity). Basic and acidic residues predominate over residues 496-529 (HVGDRKGSRRRMDTEERKDKDSIHGHSQLDKRPE). Residues Ser546, Ser893, and Ser900 each carry the phosphoserine modification. Positions 911-1114 (EFPEARGEHV…MGDGHRGQHT (204 aa)) are disordered. Composition is skewed to basic and acidic residues over residues 913-922 (PEARGEHVHS) and 969-1000 (NRER…DPKT). Residues Ser1006, Ser1011, Ser1014, Ser1023, and Ser1024 each carry the phosphoserine modification. Positions 1039-1048 (SKQFYNQTYG) are enriched in polar residues. Ser1049 carries the phosphoserine modification. Basic and acidic residues-rich tracts occupy residues 1067-1086 (VRSE…EGYQ) and 1096-1114 (FRGD…GQHT).

Interacts with MYD88; the interaction is direct. Interacts with ALKBH3; the interaction is direct. Interacts with USP7; the interaction is direct. Interacts with USP9X; the interaction is direct. Post-translationally, phosphorylated on Ser-202 and Ser-204 likely by CSNK2A1-CSNK2A2 serine/threonine-protein kinase complex. Activates 'Lys-63'-specific deubiquitinase activity.

It is found in the cytoplasm. The protein resides in the nucleus. It carries out the reaction Thiol-dependent hydrolysis of ester, thioester, amide, peptide and isopeptide bonds formed by the C-terminal Gly of ubiquitin (a 76-residue protein attached to proteins as an intracellular targeting signal).. Its activity is regulated as follows. Phosphorylation on Ser-202 and Ser-204 induces 'Lys-63'-specific deubiquitinase activity. Deubiquitinase which hydrolyzes the isopeptide bond between the ubiquitin C-terminus and the lysine epsilon-amino group of the target protein. May negatively regulate inflammatory and pathogen recognition signaling in innate immune response. Upon phosphorylation at Ser-202 and Ser-204 residues, via IL-1 receptor and Toll-like receptor signaling pathway, specifically deubiquitinates 'Lys-63'-polyubiquitinated MYD88 adapter protein triggering down-regulation of NF-kappa-B-dependent transcription of inflammatory mediators. Independently of the catalytic activity, acts as a scaffold for alternative deubiquitinases to assemble specific deubiquitinase-substrate complexes. Associates with USP7 and USP9X deubiquitinases to stabilize alkylation repair enzyme ALKBH3, thereby promoting the repair of alkylated DNA lesions. This Homo sapiens (Human) protein is OTU domain-containing protein 4.